The following is a 300-amino-acid chain: Ornithine carbamoyltransferase (300 aa).

Carbamoyl phosphate contacts are provided by residues 49–52, Q76, R100, and 127–130; these read STRT and HPCQ. Residues N158, D218, and 222-223 each bind L-ornithine; that span reads SM. Carbamoyl phosphate-binding positions include 258 to 259 and R286; that span reads CL.

This sequence belongs to the aspartate/ornithine carbamoyltransferase superfamily. OTCase family.

The protein resides in the cytoplasm. The catalysed reaction is carbamoyl phosphate + L-ornithine = L-citrulline + phosphate + H(+). It participates in amino-acid biosynthesis; L-arginine biosynthesis; L-arginine from L-ornithine and carbamoyl phosphate: step 1/3. Functionally, reversibly catalyzes the transfer of the carbamoyl group from carbamoyl phosphate (CP) to the N(epsilon) atom of ornithine (ORN) to produce L-citrulline. This is Ornithine carbamoyltransferase from Oleidesulfovibrio alaskensis (strain ATCC BAA-1058 / DSM 17464 / G20) (Desulfovibrio alaskensis).